A 265-amino-acid chain; its full sequence is C-type lectin domain family 12 member A (265 aa).

Residues 1 to 43 (MSEEVTYADLQFQNSSEMEKIPEIGKFGEKAPPAPSHVWRPAA) lie on the Cytoplasmic side of the membrane. The ITIM motif signature appears at 5–10 (VTYADL). Tyr7 carries the phosphotyrosine modification. The chain crosses the membrane as a helical; Signal-anchor for type II membrane protein span at residues 44-64 (LFLTLLCLLLLIGLGVLASMF). Over 65–265 (HVTLKIEMKK…QLGSTYFREA (201 aa)) the chain is Extracellular. N-linked (GlcNAc...) asparagine glycans are attached at residues Asn88 and Asn98. Disulfide bonds link Cys118–Cys130, Cys133–Cys144, Cys161–Cys248, and Cys227–Cys240. Residues 140-249 (HKDSCYFLSD…CTYKKRMICE (110 aa)) form the C-type lectin domain. The N-linked (GlcNAc...) asparagine glycan is linked to Asn165.

In terms of assembly, homodimer; disulfide-linked. Interacts (when the ITIM motif is phosphorylated) with PTPN6 and PTPN11. Post-translationally, phosphorylated at Tyr-7 by SRC in the ITIM motif following ligand-binding, promoting recruitment of tyrosine-protein phosphatases PTPN6 and PTPN11. In terms of processing, highly N-glycosylated; glycosylation varies between cell types. As to expression, preferentially expressed in lymphoid tissues and immune cells, including natural killer (NK) cells, T-cells, dendritic cells and monocytes or macrophages. Detected in spleen macrophage-rich red pulp and in lymph node (at protein level). Detected in peripheral blood leukocytes, dendritic cells, bone marrow, monocytes, mononuclear leukocytes and macrophages.

The protein localises to the cell membrane. Its function is as follows. Myeloid inhibitory C-type lectin receptor that acts as a negative regulator of myeloid cell activation. Myeloid cell inhibition is required to limit proinflammatory pathways and protect against excessive inflammation. Specifically recognizes and binds various structures, such as neutrophil extracellular traps (NETs) or monosodium urate crystals. Also acts as a pattern-recognition receptor for pathogen-associated molecules, such as plasmodium hemozoin or mycobacterial micolic acid. Ligand-binding induces phosphorylation of its ITIM motif, followed by recruitment of tyrosine-protein phosphatases PTPN6 and PTPN11, which counteract tyrosine-protein kinase SYK, thereby preventing myeloid cell activation. Acts as a pattern-recognition receptor for NETs in neutrophils: specifically recognizes DNA in NETs, leading to inhibit neutrophil activation and limit further NET formation. This regulation is essential for controlling key neutrophil responses and limit NET-mediated inflammatory conditions. Also recognizes dead cells by acting as a receptor for monosodium urate crystals, leading to down-regulate neutrophil activation. Binding to monosodium urate crystals also promotes the type I interferon response. Acts as an inhibitor of natural killer (NK) cell cytotoxicity. Also acts as an ihibitor of dendritic cell maturation in an IL10-dependent manner. The sequence is that of C-type lectin domain family 12 member A from Homo sapiens (Human).